Here is a 380-residue protein sequence, read N- to C-terminus: L-lactate dehydrogenase (380 aa).

An FMN hydroxy acid dehydrogenase domain is found at 1 to 380; it reads MIISSTTDFR…DRSILAKTDR (380 aa). Y24 contributes to the substrate binding site. The FMN site is built by S106 and Q127. Y129 contributes to the substrate binding site. T155 provides a ligand contact to FMN. R164 provides a ligand contact to substrate. Residue K251 participates in FMN binding. The Proton acceptor role is filled by H275. R278 is a binding site for substrate. 306 to 330 contacts FMN; the sequence is DGGVRSGLDVVRMLALGAKGVLLGR.

Belongs to the FMN-dependent alpha-hydroxy acid dehydrogenase family. It depends on FMN as a cofactor.

The protein localises to the cell inner membrane. The catalysed reaction is (S)-lactate + A = pyruvate + AH2. Catalyzes the conversion of L-lactate to pyruvate. Is coupled to the respiratory chain. The sequence is that of L-lactate dehydrogenase from Caulobacter sp. (strain K31).